The following is a 1582-amino-acid chain: Nik-related protein kinase (1582 aa).

The Protein kinase domain maps to Phe-25–Val-313. Residues Ile-31–Ile-39 and Lys-54 each bind ATP. Asp-177 serves as the catalytic Proton acceptor. Composition is skewed to low complexity over residues Gln-492–Thr-507, Pro-527–Gln-538, and Glu-551–Glu-572. Residues Gln-492–Glu-579 are disordered. Residues Gln-725–Val-759 are a coiled coil. Disordered regions lie at residues Glu-783–Ser-859 and Ala-926–Met-1156. Composition is skewed to polar residues over residues Phe-803–Glu-814, Arg-825–Leu-834, and Arg-850–Ser-859. Phosphoserine occurs at positions 852 and 855. The segment covering Ala-926–Asp-944 has biased composition (acidic residues). 2 stretches are compositionally biased toward basic and acidic residues: residues Val-965–Asp-978 and Gly-999–Tyr-1016. Residues Ser-1027, Ser-1031, and Ser-1034 each carry the phosphoserine modification. Basic and acidic residues-rich tracts occupy residues Gln-1043–Gly-1061 and Pro-1125–Ser-1135. Polar residues predominate over residues Glu-1136–Ser-1154. The region spanning Thr-1209–Leu-1552 is the CNH domain.

It belongs to the protein kinase superfamily. STE Ser/Thr protein kinase family. STE20 subfamily.

The enzyme catalyses L-seryl-[protein] + ATP = O-phospho-L-seryl-[protein] + ADP + H(+). It carries out the reaction L-threonyl-[protein] + ATP = O-phospho-L-threonyl-[protein] + ADP + H(+). Its function is as follows. May phosphorylate cofilin-1 and induce actin polymerization through this process, during the late stages of embryogenesis. Involved in the TNF-alpha-induced signaling pathway. In Homo sapiens (Human), this protein is Nik-related protein kinase (NRK).